A 502-amino-acid polypeptide reads, in one-letter code: Exodeoxyribonuclease 7 large subunit (502 aa).

Residues 474–495 (SAPSTTKKSAPKPAAPKAPKTP) show a composition bias toward low complexity. The interval 474–502 (SAPSTTKKSAPKPAAPKAPKTPGEQGSLF) is disordered.

Belongs to the XseA family. Heterooligomer composed of large and small subunits.

It is found in the cytoplasm. The enzyme catalyses Exonucleolytic cleavage in either 5'- to 3'- or 3'- to 5'-direction to yield nucleoside 5'-phosphates.. In terms of biological role, bidirectionally degrades single-stranded DNA into large acid-insoluble oligonucleotides, which are then degraded further into small acid-soluble oligonucleotides. This is Exodeoxyribonuclease 7 large subunit from Ruegeria sp. (strain TM1040) (Silicibacter sp.).